Here is a 934-residue protein sequence, read N- to C-terminus: Protein unc-45 homolog B (934 aa).

TPR repeat units follow at residues 9 to 42 (SVQLKEEGNKHFQAGEIDQAIDCYTKAIKTCKKE), 48 to 81 (AVIYRNRSACFLKKENYSNAASDATKAIDVDAAD), and 83 to 115 (KALYRRCQAFEKLGKLDMAFKDVQRCATIEPKN). ARM repeat units lie at residues 174–213 (DAGAERIFQNNGVPLLMQLIDTGKPEMILAAIRTLSGMCT), 216–255 (RARATAIIHSVGISKLCSIMAVDNEEIALATANLFQCVND), and 753–792 (DKLRVKILKEKALPEIENYMFEDHEQIRQAATECMCNLVC).

In terms of assembly, interacts with apobec2a, apobec2b, hsp90a.1, hsp90a.2, hsp90ab1 and myosin. In terms of tissue distribution, expressed in striated muscle tissue including somites, heart and craniofacial muscle. Detected in mesoderm adjacent to the dorsal midline during the late gastrula stages and in somitic mesoderm during development of trunk skeletal muscle. Also expressed in cranial skeletal muscle and in cardiac and smooth muscle. Detected in somitic muscle and heart primordium of 24 hour embryos. At later stages, expressed in muscles of pectoral fins, jaw, branchial arches and eye.

The protein localises to the cytoplasm. Its subcellular location is the myofibril. It localises to the sarcomere. The protein resides in the z line. It is found in the a band. The protein localises to the perinuclear region. In terms of biological role, acts as a co-chaperone for HSP90 and is required for proper folding of the myosin motor domain. Plays a role in sarcomere formation during muscle cell development. Required for myoseptal integrity, myofiber attachment, motility and craniofacial development. Is necessary for normal early lens development. The chain is Protein unc-45 homolog B from Danio rerio (Zebrafish).